Reading from the N-terminus, the 362-residue chain is Dihydroorotate dehydrogenase (quinone) (362 aa).

FMN-binding positions include 62–66 (AGYDK) and threonine 86. Lysine 66 contacts substrate. 111–115 (NRLGF) contributes to the substrate binding site. FMN contacts are provided by asparagine 139 and asparagine 170. A substrate-binding site is contributed by asparagine 170. Residue serine 173 is the Nucleophile of the active site. Residue asparagine 175 participates in substrate binding. 2 residues coordinate FMN: lysine 215 and serine 243. 244-245 (NT) is a binding site for substrate. FMN-binding positions include glycine 266, glycine 295, and 316-317 (YS).

It belongs to the dihydroorotate dehydrogenase family. Type 2 subfamily. In terms of assembly, monomer. FMN is required as a cofactor.

Its subcellular location is the cell membrane. The enzyme catalyses (S)-dihydroorotate + a quinone = orotate + a quinol. It functions in the pathway pyrimidine metabolism; UMP biosynthesis via de novo pathway; orotate from (S)-dihydroorotate (quinone route): step 1/1. Its function is as follows. Catalyzes the conversion of dihydroorotate to orotate with quinone as electron acceptor. This chain is Dihydroorotate dehydrogenase (quinone), found in Rhizobium johnstonii (strain DSM 114642 / LMG 32736 / 3841) (Rhizobium leguminosarum bv. viciae).